The sequence spans 169 residues: Nucleoside-triphosphatase THEP1 (169 aa).

ATP is bound by residues 11-18 (GEPGVGKT) and 100-107 (IIGIDEIG).

It belongs to the THEP1 NTPase family.

It catalyses the reaction a ribonucleoside 5'-triphosphate + H2O = a ribonucleoside 5'-diphosphate + phosphate + H(+). Has nucleotide phosphatase activity towards ATP, GTP, CTP, TTP and UTP. May hydrolyze nucleoside diphosphates with lower efficiency. The polypeptide is Nucleoside-triphosphatase THEP1 (Sulfurisphaera tokodaii (strain DSM 16993 / JCM 10545 / NBRC 100140 / 7) (Sulfolobus tokodaii)).